A 100-amino-acid chain; its full sequence is NAD(P)H-quinone oxidoreductase subunit 4L, chloroplastic (100 aa).

Transmembrane regions (helical) follow at residues 2 to 22, 28 to 48, and 61 to 81; these read ILQH…FGLI, VKIL…LVIF, and LFGL…LAIL.

The protein belongs to the complex I subunit 4L family. As to quaternary structure, NDH is composed of at least 16 different subunits, 5 of which are encoded in the nucleus.

It is found in the plastid. Its subcellular location is the chloroplast thylakoid membrane. The enzyme catalyses a plastoquinone + NADH + (n+1) H(+)(in) = a plastoquinol + NAD(+) + n H(+)(out). It catalyses the reaction a plastoquinone + NADPH + (n+1) H(+)(in) = a plastoquinol + NADP(+) + n H(+)(out). Functionally, NDH shuttles electrons from NAD(P)H:plastoquinone, via FMN and iron-sulfur (Fe-S) centers, to quinones in the photosynthetic chain and possibly in a chloroplast respiratory chain. The immediate electron acceptor for the enzyme in this species is believed to be plastoquinone. Couples the redox reaction to proton translocation, and thus conserves the redox energy in a proton gradient. This chain is NAD(P)H-quinone oxidoreductase subunit 4L, chloroplastic, found in Chara vulgaris (Common stonewort).